Here is a 296-residue protein sequence, read N- to C-terminus: Gamma-D-glutamyl-L-lysine dipeptidyl-peptidase (296 aa).

Substrate-binding positions include Tyr-90, 199–201 (DCS), and 218–219 (DA). Residues 170–295 (KGTAEDIIQT…ELCAVRRCFS (126 aa)) form the NlpC/P60 domain. Cys-200 (nucleophile) is an active-site residue. His-253 functions as the Proton acceptor in the catalytic mechanism. His-265 is a catalytic residue.

The protein belongs to the peptidase C40 family.

The enzyme catalyses The enzyme releases L-Ala-gamma-D-Glu dipeptides from cell wall peptides via cleavage of an L-Ala-gamma-D-Glu-|-L-Lys bond.. Its pathway is cell wall degradation; peptidoglycan degradation. Functionally, specifically hydrolyzes gamma-D-glutamyl-L-lysine bonds in murein peptides, releasing L-Ala-D-Glu. This is Gamma-D-glutamyl-L-lysine dipeptidyl-peptidase (ykfC) from Bacillus subtilis (strain 168).